The following is a 156-amino-acid chain: Proline dehydrogenase transcriptional activator (156 aa).

Residues 10–71 enclose the HTH asnC-type domain; it reads LDHFDLKILE…VLNPQKLGVD (62 aa). The segment at residues 29-48 is a DNA-binding region (H-T-H motif); the sequence is VLQLSKRVGLSKTPCQTRLK.

In terms of biological role, transcriptional activator of the putA gene in response to proline. This Rhizobium radiobacter (Agrobacterium tumefaciens) protein is Proline dehydrogenase transcriptional activator (putR).